The primary structure comprises 313 residues: LOB domain-containing protein 36 (313 aa).

Positions 6–107 (SPCAACKFLR…HDLENAKKEL (102 aa)) constitute an LOB domain. The disordered stretch occupies residues 245-313 (GNFVDSPSTN…SEEGRRNVIG (69 aa)). Residues 249-260 (DSPSTNNNYHTD) show a composition bias toward polar residues. Residues 280–302 (PSQSSQPLPLQTQETQTQTQPNS) are compositionally biased toward low complexity.

Belongs to the LOB domain-containing protein family. Expressed in trichomes, at the base of many lateral organs, including branching points of the inflorescence and floral organs and in the distal part of the pistil at stages when style and stigma start to develop. Also detected in pedicels and at the base of petals and sepals.

Controls the proximal-distal patterning in petals and the adaxial-abaxial determination of leaves. Involved in the repression of the homeobox gene BP. The protein is LOB domain-containing protein 36 (LBD36) of Arabidopsis thaliana (Mouse-ear cress).